Consider the following 249-residue polypeptide: tRNA (guanine-N(1)-)-methyltransferase (249 aa).

Residues glycine 113 and 133-138 (IGDFVV) contribute to the S-adenosyl-L-methionine site.

Belongs to the RNA methyltransferase TrmD family. As to quaternary structure, homodimer.

The protein resides in the cytoplasm. The enzyme catalyses guanosine(37) in tRNA + S-adenosyl-L-methionine = N(1)-methylguanosine(37) in tRNA + S-adenosyl-L-homocysteine + H(+). Its function is as follows. Specifically methylates guanosine-37 in various tRNAs. This is tRNA (guanine-N(1)-)-methyltransferase from Neisseria meningitidis serogroup C / serotype 2a (strain ATCC 700532 / DSM 15464 / FAM18).